Here is a 554-residue protein sequence, read N- to C-terminus: Probable urocanate hydratase (554 aa).

NAD(+) is bound by residues 49–50, Q127, E194, 240–241, 261–265, 271–272, and Y320; these read GG, NA, QTAAH, and YI. Residue C408 is part of the active site. G490 is an NAD(+) binding site.

The protein belongs to the urocanase family. NAD(+) serves as cofactor.

The protein localises to the cytoplasm. The enzyme catalyses 4-imidazolone-5-propanoate = trans-urocanate + H2O. It participates in amino-acid degradation; L-histidine degradation into L-glutamate; N-formimidoyl-L-glutamate from L-histidine: step 2/3. Functionally, catalyzes the conversion of urocanate to 4-imidazolone-5-propionate. The chain is Probable urocanate hydratase from Thermoplasma acidophilum (strain ATCC 25905 / DSM 1728 / JCM 9062 / NBRC 15155 / AMRC-C165).